A 424-amino-acid polypeptide reads, in one-letter code: Vasopressin V1a receptor (424 aa).

The disordered stretch occupies residues 1 to 40 (MSFPRGSQDRSVGNSSPWWPLTTEGSNGSQEAARLGEGDS). Over 1 to 52 (MSFPRGSQDRSVGNSSPWWPLTTEGSNGSQEAARLGEGDSPLGDVRNEELAK) the chain is Extracellular. Over residues 9–30 (DRSVGNSSPWWPLTTEGSNGSQ) the composition is skewed to polar residues. N-linked (GlcNAc...) asparagine glycosylation is present at Asn-27. A helical membrane pass occupies residues 53-76 (LEIAVLAVIFVVAVLGNSSVLLAL). Residues 77-88 (HRTPRKTSRMHL) lie on the Cytoplasmic side of the membrane. Residues 89–110 (FIRHLSLADLAVAFFQVLPQLC) form a helical membrane-spanning segment. The Extracellular segment spans residues 111–125 (WDITYRFRGPDWLCR). Residues Cys-124 and Cys-205 are joined by a disulfide bond. A helical membrane pass occupies residues 126–147 (VVKHLQVFAMFASAYMLVVMTA). Residues 148–168 (DRYIAVCHPLKTLQQPARRSR) lie on the Cytoplasmic side of the membrane. The chain crosses the membrane as a helical span at residues 169–190 (LMIATSWVLSFILSTPQYFIFS). Topologically, residues 191–220 (VIEIEVNNGTKTQDCWATFIQPWGTRAYVT) are extracellular. The chain crosses the membrane as a helical span at residues 221-241 (WMTSGVFVAPVVVLGTCYGFI). Residues 242–299 (CYHIWRNIRGKTASSRHSKGDKGSGEAVGPFHKGLLVTPCVSSVKSISRAKIRTVKMT) lie on the Cytoplasmic side of the membrane. A helical membrane pass occupies residues 300–319 (FVIVSAYILCWAPFFIVQMW). Residues 320 to 337 (SVWDENFIWTDSENPSIT) are Extracellular-facing. The helical transmembrane segment at 338 to 357 (ITALLASLNSCCNPWIYMFF) threads the bilayer. Topologically, residues 358-424 (SGHLLQDCVQ…KSIRFIPVST (67 aa)) are cytoplasmic. 2 S-palmitoyl cysteine lipidation sites follow: Cys-371 and Cys-372. The interval 383–416 (DSDSMSRRQTSYSNNRSPTNSTGMWKDSPKSSKS) is disordered. Residues 389 to 405 (RRQTSYSNNRSPTNSTG) show a composition bias toward polar residues. The residue at position 410 (Ser-410) is a Phosphoserine.

It belongs to the G-protein coupled receptor 1 family. Vasopressin/oxytocin receptor subfamily. In terms of processing, palmitoylated on three cysteine residues, of which only two are identified. Localized within gonadotropes of the anterior pituitary of the brain. Broadly distributed throughout the cerebral cortex.

It is found in the cell membrane. The protein localises to the cytoplasmic vesicle membrane. In terms of biological role, receptor for arginine vasopressin. The activity of this receptor is mediated by G proteins which activate a phosphatidyl-inositol-calcium second messenger system. Involved in social memory formation. In Rattus norvegicus (Rat), this protein is Vasopressin V1a receptor (Avpr1a).